Reading from the N-terminus, the 167-residue chain is Large ribosomal subunit protein uL10 (167 aa).

The protein belongs to the universal ribosomal protein uL10 family. Part of the ribosomal stalk of the 50S ribosomal subunit. The N-terminus interacts with L11 and the large rRNA to form the base of the stalk. The C-terminus forms an elongated spine to which L12 dimers bind in a sequential fashion forming a multimeric L10(L12)X complex.

Forms part of the ribosomal stalk, playing a central role in the interaction of the ribosome with GTP-bound translation factors. In Streptococcus mutans serotype c (strain ATCC 700610 / UA159), this protein is Large ribosomal subunit protein uL10.